The chain runs to 179 residues: MSRLKEKYLNEVSPALMSKFGYKSVMQLPKVEKIVINMGVGDAVQNSKALDAAVEELTIITGQKPVVTKAKKSIAGFRLREGMPIGAKVTLRGERMYEFLDKLISISLPRVRDFRGVSKKAFDGRGNYTLGVKEQLIFPEIDYDKVSKVRGMDIVIVTTANSDEEARELLTQFGMPFQK.

It belongs to the universal ribosomal protein uL5 family. As to quaternary structure, part of the 50S ribosomal subunit; part of the 5S rRNA/L5/L18/L25 subcomplex. Contacts the 5S rRNA and the P site tRNA. Forms a bridge to the 30S subunit in the 70S ribosome.

In terms of biological role, this is one of the proteins that bind and probably mediate the attachment of the 5S RNA into the large ribosomal subunit, where it forms part of the central protuberance. In the 70S ribosome it contacts protein S13 of the 30S subunit (bridge B1b), connecting the 2 subunits; this bridge is implicated in subunit movement. Contacts the P site tRNA; the 5S rRNA and some of its associated proteins might help stabilize positioning of ribosome-bound tRNAs. This is Large ribosomal subunit protein uL5 from Lysinibacillus sphaericus (strain C3-41).